The sequence spans 987 residues: Leucine--tRNA ligase (987 aa).

The 'HIGH' region signature appears at 69-80 (PYPSGKGLHVGH). Positions 760–764 (KMGKS) match the 'KMSKS' region motif. Lysine 763 provides a ligand contact to ATP.

The protein belongs to the class-I aminoacyl-tRNA synthetase family.

The protein localises to the cytoplasm. The catalysed reaction is tRNA(Leu) + L-leucine + ATP = L-leucyl-tRNA(Leu) + AMP + diphosphate. This is Leucine--tRNA ligase from Bifidobacterium longum (strain DJO10A).